The sequence spans 538 residues: CTP synthase (538 aa).

The segment at 1-267 is amidoligase domain; sequence MDRAKFIFVT…LTPIARRFNL (267 aa). A CTP-binding site is contributed by Ser-15. Ser-15 serves as a coordination point for UTP. ATP contacts are provided by residues 16 to 21 and Asp-73; that span reads SLGKGI. Residues Asp-73 and Glu-141 each coordinate Mg(2+). Residues 148–150, 188–193, and Lys-224 contribute to the CTP site; these read DME and KTKPTQ. Residues 188–193 and Lys-224 each bind UTP; that span reads KTKPTQ. Residues 292–538 enclose the Glutamine amidotransferase type-1 domain; sequence KIGFVGKYLS…DFIKSALSKS (247 aa). Gly-351 provides a ligand contact to L-glutamine. Cys-378 functions as the Nucleophile; for glutamine hydrolysis in the catalytic mechanism. L-glutamine-binding positions include 379–382, Glu-402, and Arg-469; that span reads LGMQ. Residues His-513 and Glu-515 contribute to the active site.

The protein belongs to the CTP synthase family. As to quaternary structure, homotetramer.

It catalyses the reaction UTP + L-glutamine + ATP + H2O = CTP + L-glutamate + ADP + phosphate + 2 H(+). It carries out the reaction L-glutamine + H2O = L-glutamate + NH4(+). The enzyme catalyses UTP + NH4(+) + ATP = CTP + ADP + phosphate + 2 H(+). Its pathway is pyrimidine metabolism; CTP biosynthesis via de novo pathway; CTP from UDP: step 2/2. With respect to regulation, allosterically activated by GTP, when glutamine is the substrate; GTP has no effect on the reaction when ammonia is the substrate. The allosteric effector GTP functions by stabilizing the protein conformation that binds the tetrahedral intermediate(s) formed during glutamine hydrolysis. Inhibited by the product CTP, via allosteric rather than competitive inhibition. Functionally, catalyzes the ATP-dependent amination of UTP to CTP with either L-glutamine or ammonia as the source of nitrogen. Regulates intracellular CTP levels through interactions with the four ribonucleotide triphosphates. The chain is CTP synthase from Helicobacter pylori (strain ATCC 700392 / 26695) (Campylobacter pylori).